Consider the following 453-residue polypeptide: Phosphoglucosamine mutase (453 aa).

The Phosphoserine intermediate role is filled by Ser110. 4 residues coordinate Mg(2+): Ser110, Asp248, Asp250, and Asp252. At Ser110 the chain carries Phosphoserine.

Belongs to the phosphohexose mutase family. Mg(2+) is required as a cofactor. In terms of processing, activated by phosphorylation.

It catalyses the reaction alpha-D-glucosamine 1-phosphate = D-glucosamine 6-phosphate. Catalyzes the conversion of glucosamine-6-phosphate to glucosamine-1-phosphate. In Mycolicibacterium smegmatis (strain ATCC 700084 / mc(2)155) (Mycobacterium smegmatis), this protein is Phosphoglucosamine mutase.